A 400-amino-acid polypeptide reads, in one-letter code: MSQQHTLPVTLPAALSQEPLKTVSPPPNTQQEHTKQPTPLPAPCQEVPSELPVEDPSKHKEKHTTPVKGVPEQEHELQQQQDSQEQELHLGQQQQQQEYQEQELHLGQQQQQQEYQEQELHLGQQQQQEYQEQELHLGQHQQQTSQEQKLHLGQQQQHQESQEQKLHLEQQQQEPQKQELHLGQQEAQEEELHLKQQQQECQKEEVHLEQQQQECQKEEVHLEQQQQECQKEEVHLEQQQQECQKEEVHLEQQQQECQKEEVHLEQQQQECQKEEVHLEQQQQETQELQQHQGAGILEQKLHQEKAQSEQQLKGQLDWEEKLLDQQLEQELAKRDEQLGKKEEQLLEPSEQQEGLLEQPTLVPAPSQLHENQAAQVPKGEVLLPIEQQRQQEVQWPVKHK.

Disordered stretches follow at residues 1 to 196 (MSQQ…HLKQ), 273 to 312 (KEEVHLEQQQQETQELQQHQGAGILEQKLHQEKAQSEQQL), and 333 to 381 (KRDE…KGEV). 3 stretches are compositionally biased toward low complexity: residues 78-159 (QQQQ…QQHQ), 169-186 (EQQQQEPQKQELHLGQQE), and 279-292 (EQQQQETQELQQHQ). Positions 333-344 (KRDEQLGKKEEQ) are enriched in basic and acidic residues. Over residues 346–358 (LEPSEQQEGLLEQ) the composition is skewed to low complexity.

The protein belongs to the involucrin family. Directly or indirectly cross-linked to cornifelin (CNFN). Substrate of transglutaminase. Specific glutamines or lysines are cross-linked to keratins, desmoplakin and to inter involucrin molecules. Keratinocytes of epidermis and other stratified squamous epithelia.

The protein resides in the cytoplasm. Part of the insoluble cornified cell envelope (CE) of stratified squamous epithelia. This Tupaia glis (Common tree shrew) protein is Involucrin (IVL).